Reading from the N-terminus, the 456-residue chain is MAARNWSRVWVGGTVILISFIAFSSQIFVIWPWYGREISLDLLMLLVPLNLAAFMIFWNYRLCVITSPGTVPEGWRPNIGAMDGMEVKKGTHTPRYCKNCAHYKPPRAHHCRQCKTCWLKLDHHCPWIGNCVGFYNQGHFIRFLLWVDIGTTFHLIIMVRRVLYIAEYYHEPTLADVLFLVFNFATCVPVWLCVGMFSIYHVYLACGNSTTIEGWEKDKVATLIRRGKIKEVKYPYNIGIYKNIKSVLGPNPLLWLWPQKMQGDGLSFPVNPSAGDHMTQYFWPPQDPSRLPNPPPIPAHASPFVYGNNGFNPNLRPTNSLRARRSSTPRIDEDEYSHEQGRHYSSGDERDNGSISASSSPEPYLSDYDHYDEGPMYPGERMTTLVPRVRRGSEGWEVAPGGGWNAYAGMMDEEVGWDDEAGYDEAPGEDPYVERPWEMRGRYNVYDPEEESGYTH.

The Cytoplasmic portion of the chain corresponds to 1–9; sequence MAARNWSRV. A helical transmembrane segment spans residues 10-30; the sequence is WVGGTVILISFIAFSSQIFVI. Topologically, residues 31-37 are lumenal; sequence WPWYGRE. The chain crosses the membrane as a helical span at residues 38–58; it reads ISLDLLMLLVPLNLAAFMIFW. Over 59-138 the chain is Cytoplasmic; that stretch reads NYRLCVITSP…GNCVGFYNQG (80 aa). One can recognise a DHHC domain in the interval 95–145; it reads RYCKNCAHYKPPRAHHCRQCKTCWLKLDHHCPWIGNCVGFYNQGHFIRFLL. The S-palmitoyl cysteine intermediate role is filled by cysteine 125. Residues 139 to 159 form a helical membrane-spanning segment; sequence HFIRFLLWVDIGTTFHLIIMV. Over 160-176 the chain is Lumenal; that stretch reads RRVLYIAEYYHEPTLAD. A helical membrane pass occupies residues 177–197; the sequence is VLFLVFNFATCVPVWLCVGMF. The Cytoplasmic portion of the chain corresponds to 198–456; it reads SIYHVYLACG…DPEEESGYTH (259 aa). The segment at 284 to 377 is disordered; sequence PPQDPSRLPN…YDHYDEGPMY (94 aa). Residues 285 to 298 show a composition bias toward pro residues; that stretch reads PQDPSRLPNPPPIP. The span at 309–321 shows a compositional bias: polar residues; that stretch reads NGFNPNLRPTNSL. Positions 337–352 are enriched in basic and acidic residues; that stretch reads SHEQGRHYSSGDERDN.

The protein belongs to the DHHC palmitoyltransferase family. PFA4 subfamily.

Its subcellular location is the endoplasmic reticulum membrane. The enzyme catalyses L-cysteinyl-[protein] + hexadecanoyl-CoA = S-hexadecanoyl-L-cysteinyl-[protein] + CoA. Functionally, mediates the reversible addition of palmitate to target proteins, thereby regulating their membrane association and biological function. Responsible for the modification of a subset of proteins that are critical in cryptococcal pathogenesis, with substrates involved in cell wall synthesis, signal transduction, and membrane trafficking. Palmitoylates chitin synthase CHS3. This is Palmitoyltransferase PFA4 from Cryptococcus neoformans var. grubii serotype A (strain H99 / ATCC 208821 / CBS 10515 / FGSC 9487) (Filobasidiella neoformans var. grubii).